A 447-amino-acid chain; its full sequence is Rab GDP dissociation inhibitor alpha (447 aa).

Position 427 is a phosphoserine (S427).

It belongs to the Rab GDI family. As to quaternary structure, interacts with RHOH. Interacts with the non-phosphorylated forms of RAB1A, RAB3A, RAB5A, RAB5B, RAB5C, RAB8A, RAB8B, RAB10, RAB12, RAB35, and RAB43.

It is found in the cytoplasm. The protein resides in the golgi apparatus. Its subcellular location is the trans-Golgi network. Its function is as follows. Regulates the GDP/GTP exchange reaction of most Rab proteins by inhibiting the dissociation of GDP from them, and the subsequent binding of GTP to them. Promotes the dissociation of GDP-bound Rab proteins from the membrane and inhibits their activation. Promotes the dissociation of RAB1A, RAB3A, RAB5A and RAB10 from membranes. The protein is Rab GDP dissociation inhibitor alpha (GDI1) of Canis lupus familiaris (Dog).